Here is a 550-residue protein sequence, read N- to C-terminus: C-type lectin domain family 4 member F (550 aa).

Residues 1–42 (MKEAELNRDVAKFCTDNQCVILQPQGLGPKSAAPMAPRTLRH) lie on the Cytoplasmic side of the membrane. The helical; Signal-anchor for type II membrane protein transmembrane segment at 43-69 (VQAIVALVVVTVFFSLLALFVVVLQPW) threads the bilayer. The Extracellular portion of the chain corresponds to 70–550 (RQKQNEDHPV…DWSVARTDQS (481 aa)). N-linked (GlcNAc...) asparagine glycosylation is found at N87, N93, N115, N132, N209, and N255. The C-type lectin domain occupies 438-538 (NFCVSQGAHL…GTAYNWVCKK (101 aa)). Intrachain disulfides connect C440-C536 and C516-C528.

In terms of tissue distribution, kupffer cells.

The protein localises to the membrane. Its function is as follows. Receptor with an affinity for galactose and fucose. Could be involved in endocytosis. The chain is C-type lectin domain family 4 member F (Clec4f) from Rattus norvegicus (Rat).